The chain runs to 355 residues: Squamosa promoter-binding protein-like 15 (355 aa).

The interval 1–27 (MELLKGSGLNQTESGGSSSTESSSLSG) is disordered. The span at 12–27 (TESGGSSSTESSSLSG) shows a compositional bias: low complexity. The SBP-type zinc-finger motif lies at 61–138 (TARCQVEGCR…ACHNERRRKP (78 aa)). The Zn(2+) site is built by cysteine 64, cysteine 69, cysteine 86, histidine 89, cysteine 105, cysteine 108, histidine 112, and cysteine 124. Positions 121-137 (KRSCRRRLACHNERRRK) match the Bipartite nuclear localization signal motif.

Its subcellular location is the nucleus. Functionally, probable transcription factor required for the flowering response to vernalization in the shoot apical meristem (SAM). Defines the competence of shoot meristems to flower in response to vernalization in perennials. The sequence is that of Squamosa promoter-binding protein-like 15 from Arabis alpina (Alpine rock-cress).